Here is a 349-residue protein sequence, read N- to C-terminus: GTP 3',8-cyclase (349 aa).

Residues 26–245 (GFGRAVTYLR…SSFWTLTDIP (220 aa)) form the Radical SAM core domain. Arg-35 is a binding site for GTP. [4Fe-4S] cluster is bound by residues Cys-42 and Cys-46. Residue Tyr-48 participates in S-adenosyl-L-methionine binding. Cys-49 is a binding site for [4Fe-4S] cluster. Residue Arg-84 participates in GTP binding. Gly-88 contributes to the S-adenosyl-L-methionine binding site. Thr-118 contributes to the GTP binding site. An S-adenosyl-L-methionine-binding site is contributed by Ser-142. Residue Lys-178 participates in GTP binding. Met-212 provides a ligand contact to S-adenosyl-L-methionine. Residues Cys-275 and Cys-278 each contribute to the [4Fe-4S] cluster site. 280–282 (RVR) is a GTP binding site. Cys-292 is a binding site for [4Fe-4S] cluster.

The protein belongs to the radical SAM superfamily. MoaA family. As to quaternary structure, monomer and homodimer. The cofactor is [4Fe-4S] cluster.

It catalyses the reaction GTP + AH2 + S-adenosyl-L-methionine = (8S)-3',8-cyclo-7,8-dihydroguanosine 5'-triphosphate + 5'-deoxyadenosine + L-methionine + A + H(+). It functions in the pathway cofactor biosynthesis; molybdopterin biosynthesis. Catalyzes the cyclization of GTP to (8S)-3',8-cyclo-7,8-dihydroguanosine 5'-triphosphate. The chain is GTP 3',8-cyclase from Caulobacter vibrioides (strain ATCC 19089 / CIP 103742 / CB 15) (Caulobacter crescentus).